The sequence spans 162 residues: Transmembrane protein 92 (162 aa).

The N-terminal stretch at 1-22 is a signal peptide; it reads MLDTWVWGTLTLTFGLLSSLQG. Over 23 to 63 the chain is Extracellular; it reads VSFNETANTCDILNCPKGFTCCVKECCPERKVWDPANDRFR. The chain crosses the membrane as a helical span at residues 64-84; that stretch reads FLVILACIIFPILFICALVSL. Over 85–162 the chain is Cytoplasmic; it reads FCPNCTELQH…QMRGRAYATL (78 aa). The disordered stretch occupies residues 134–162; that stretch reads TPPTEPPPPYSLRPEGPAGQMRGRAYATL.

It localises to the membrane. This Mus musculus (Mouse) protein is Transmembrane protein 92 (Tmem92).